Reading from the N-terminus, the 468-residue chain is MSFRLSGGSRRICSRTGSGRLSGGGTGFVAGNVCVGSGARSSFSCTLEGISSGGSFCNSGGGLGSGACAGFLGNEHSLLSGNEKVTMQNLNDRLASYLDHVHALEEANADLEQKIKGWYEKCEPGSSREHDHDYSRYFSVIEDLKRQIISATICNASIVLQNDNARLTADDFRLKYENELALHHSVEADTSGLRRVLDELTLCTTDLEIQCETLSEELTYLKKSHEEEMEVLQYTAGGNVNVEMNATPGVDLTVLLNNMRAEYEDLAEQNRKDAEAWFNERSATLQQQISDHEGAATAARNELTELKRNLQTLEIELQSLMAVKHSYECSLAETEGNYCNQLQQIQDQIGVMEEQLQQIRTETEGQKLEYEQLLDVKIFLEKEIDIYCNLLDGEERKSKSTCYKSKGYRPVNSGNQAKDSTEETIVKTVVEELDQIGNLLSLRVHSVEEKSSKISNITVEQRVPSKAP.

The head stretch occupies residues 1-82 (MSFRLSGGSR…GNEHSLLSGN (82 aa)). The tract at residues 83 to 118 (EKVTMQNLNDRLASYLDHVHALEEANADLEQKIKGW) is coil 1A. One can recognise an IF rod domain in the interval 83–398 (EKVTMQNLND…NLLDGEERKS (316 aa)). The interval 119 to 140 (YEKCEPGSSREHDHDYSRYFSV) is linker 1. A coil 1B region spans residues 141–232 (IEDLKRQIIS…KSHEEEMEVL (92 aa)). A linker 12 region spans residues 233–255 (QYTAGGNVNVEMNATPGVDLTVL). Residues 256 to 394 (LNNMRAEYED…DIYCNLLDGE (139 aa)) form a coil 2 region. The tract at residues 395–465 (ERKSKSTCYK…NITVEQRVPS (71 aa)) is tail.

The protein belongs to the intermediate filament family. In terms of assembly, heterotetramer of two type I and two type II keratins. Strongly expressed in skin and scalp, and weak expression observed in thymus and tongue. In the hair follicle, expression is restricted to the mid- to upper inner root sheath cuticle, being present slightly above the apex of the dermal papilla (at protein level).

This is Keratin, type I cytoskeletal 26 from Homo sapiens (Human).